A 198-amino-acid chain; its full sequence is Holliday junction branch migration complex subunit RuvA (198 aa).

The domain I stretch occupies residues 1–64 (MYEYIKGEYM…EDFIGLYGFE (64 aa)). The segment at 65-143 (SLEELDMFKL…SDELLNCIDE (79 aa)) is domain II. The segment at 144-154 (FDDVTQDNSLA) is flexible linker. The tract at residues 154 to 198 (ALSEALSALISLGYTEKEAEKVLKDVDKSESVENIIKSALVKLMG) is domain III.

It belongs to the RuvA family. In terms of assembly, homotetramer. Forms an RuvA(8)-RuvB(12)-Holliday junction (HJ) complex. HJ DNA is sandwiched between 2 RuvA tetramers; dsDNA enters through RuvA and exits via RuvB. An RuvB hexamer assembles on each DNA strand where it exits the tetramer. Each RuvB hexamer is contacted by two RuvA subunits (via domain III) on 2 adjacent RuvB subunits; this complex drives branch migration. In the full resolvosome a probable DNA-RuvA(4)-RuvB(12)-RuvC(2) complex forms which resolves the HJ.

The protein resides in the cytoplasm. Its function is as follows. The RuvA-RuvB-RuvC complex processes Holliday junction (HJ) DNA during genetic recombination and DNA repair, while the RuvA-RuvB complex plays an important role in the rescue of blocked DNA replication forks via replication fork reversal (RFR). RuvA specifically binds to HJ cruciform DNA, conferring on it an open structure. The RuvB hexamer acts as an ATP-dependent pump, pulling dsDNA into and through the RuvAB complex. HJ branch migration allows RuvC to scan DNA until it finds its consensus sequence, where it cleaves and resolves the cruciform DNA. The chain is Holliday junction branch migration complex subunit RuvA from Clostridium botulinum (strain Alaska E43 / Type E3).